The chain runs to 156 residues: ATP synthase subunit b (156 aa).

The chain crosses the membrane as a helical span at residues 11 to 31; the sequence is AIAFVLFVLFCMKYVWPPIMA.

The protein belongs to the ATPase B chain family. In terms of assembly, F-type ATPases have 2 components, F(1) - the catalytic core - and F(0) - the membrane proton channel. F(1) has five subunits: alpha(3), beta(3), gamma(1), delta(1), epsilon(1). F(0) has three main subunits: a(1), b(2) and c(10-14). The alpha and beta chains form an alternating ring which encloses part of the gamma chain. F(1) is attached to F(0) by a central stalk formed by the gamma and epsilon chains, while a peripheral stalk is formed by the delta and b chains.

It localises to the cell inner membrane. Functionally, f(1)F(0) ATP synthase produces ATP from ADP in the presence of a proton or sodium gradient. F-type ATPases consist of two structural domains, F(1) containing the extramembraneous catalytic core and F(0) containing the membrane proton channel, linked together by a central stalk and a peripheral stalk. During catalysis, ATP synthesis in the catalytic domain of F(1) is coupled via a rotary mechanism of the central stalk subunits to proton translocation. Its function is as follows. Component of the F(0) channel, it forms part of the peripheral stalk, linking F(1) to F(0). In Proteus mirabilis (strain HI4320), this protein is ATP synthase subunit b.